Consider the following 363-residue polypeptide: Carbamoyl phosphate synthase small chain (363 aa).

CPSase stretches follow at residues 1 to 168 (MTKR…ASPG) and 1 to 172 (MTKR…DGKR). S46, G220, and G222 together coordinate L-glutamine. The 188-residue stretch at 172 to 359 (RVVLVDYGVK…MEMMNVKEEG (188 aa)) folds into the Glutamine amidotransferase type-1 domain. The active-site Nucleophile is C247. L248, Q251, N289, G291, and Y292 together coordinate L-glutamine. Catalysis depends on residues H332 and E334.

Belongs to the CarA family. In terms of assembly, composed of two chains; the small (or glutamine) chain promotes the hydrolysis of glutamine to ammonia, which is used by the large (or ammonia) chain to synthesize carbamoyl phosphate. Tetramer of heterodimers (alpha,beta)4.

The catalysed reaction is hydrogencarbonate + L-glutamine + 2 ATP + H2O = carbamoyl phosphate + L-glutamate + 2 ADP + phosphate + 2 H(+). It catalyses the reaction L-glutamine + H2O = L-glutamate + NH4(+). It functions in the pathway amino-acid biosynthesis; L-arginine biosynthesis; carbamoyl phosphate from bicarbonate: step 1/1. It participates in pyrimidine metabolism; UMP biosynthesis via de novo pathway; (S)-dihydroorotate from bicarbonate: step 1/3. Small subunit of the glutamine-dependent carbamoyl phosphate synthetase (CPSase). CPSase catalyzes the formation of carbamoyl phosphate from the ammonia moiety of glutamine, carbonate, and phosphate donated by ATP, constituting the first step of 2 biosynthetic pathways, one leading to arginine and/or urea and the other to pyrimidine nucleotides. The small subunit (glutamine amidotransferase) binds and cleaves glutamine to supply the large subunit with the substrate ammonia. This chain is Carbamoyl phosphate synthase small chain, found in Listeria innocua serovar 6a (strain ATCC BAA-680 / CLIP 11262).